Here is a 460-residue protein sequence, read N- to C-terminus: Zinc transporter 6 (460 aa).

Topologically, residues Met1–Lys33 are cytoplasmic. The chain crosses the membrane as a helical span at residues Ile34–Ser54. Residues Thr55–Thr64 are Extracellular-facing. A helical membrane pass occupies residues Tyr65 to Val85. The Cytoplasmic segment spans residues Lys86–Arg98. Residues Phe99–Leu119 form a helical membrane-spanning segment. The Extracellular segment spans residues Lys120–Thr134. The helical transmembrane segment at Gly135 to Val155 threads the bilayer. At Arg156–Pro200 the chain is on the cytoplasmic side. The helical transmembrane segment at Phe201–Ile221 threads the bilayer. Over Asn222–Asp228 the chain is Extracellular. Residues Thr229 to Tyr249 traverse the membrane as a helical segment. Residues Ser250–Pro460 are Cytoplasmic-facing. The tract at residues Pro372–Pro392 is disordered.

This sequence belongs to the cation diffusion facilitator (CDF) transporter (TC 2.A.4) family. SLC30A subfamily. As to quaternary structure, heterodimer with SLC30A5; form a functional zinc ion transmembrane transporter.

It localises to the golgi apparatus. The protein localises to the trans-Golgi network membrane. Functionally, has probably no intrinsic transporter activity but together with SLC30A5 forms a functional zinc ion:proton antiporter heterodimer, mediating zinc entry into the lumen of organelles along the secretory pathway. As part of that zinc ion:proton antiporter, contributes to zinc ion homeostasis within the early secretory pathway and regulates the activation and folding of enzymes like alkaline phosphatases and enzymes involved in phosphatidylinositol glycan anchor biosynthesis. The chain is Zinc transporter 6 (SLC30A6) from Gallus gallus (Chicken).